The chain runs to 480 residues: Probable histone deacetylase 1-A (480 aa).

The tract at residues 10–321 (KVCYYYDGDV…WTYETAVALD (312 aa)) is histone deacetylase. Residue H141 is part of the active site. Positions 388–480 (SIHDDSGEED…KRVKEETKSV (93 aa)) are disordered. Basic and acidic residues predominate over residues 401–416 (PDKRISIRSSDKRIAC). A compositionally biased stretch (acidic residues) spans 417–427 (DEEFSDSEDEG). Over residues 443 to 480 (VKTEEEKEGEDKKDVKEEEKAKDEKTDSKRVKEETKSV) the composition is skewed to basic and acidic residues.

The protein belongs to the histone deacetylase family. HD type 1 subfamily. As to quaternary structure, part of a large multiprotein complex that also contains RBBP4. In terms of tissue distribution, oocyte.

The protein localises to the nucleus. It is found in the cytoplasm. It carries out the reaction N(6)-acetyl-L-lysyl-[histone] + H2O = L-lysyl-[histone] + acetate. The catalysed reaction is N(6)-acetyl-L-lysyl-[protein] + H2O = L-lysyl-[protein] + acetate. It catalyses the reaction N(6)-(2E)-butenoyl-L-lysyl-[protein] + H2O = (2E)-2-butenoate + L-lysyl-[protein]. Histone deacetylase that catalyzes the deacetylation of lysine residues on the N-terminal part of the core histones (H2A, H2B, H3 and H4). Histone deacetylation gives a tag for epigenetic repression and plays an important role in transcriptional regulation, cell cycle progression and developmental events. Histone deacetylases act via the formation of large multiprotein complexes. Also functions as deacetylase for non-histone proteins. In addition to protein deacetylase activity, also has protein-lysine deacylase activity: acts as a protein decrotonylase by mediating decrotonylation ((2E)-butenoyl) of histones. The sequence is that of Probable histone deacetylase 1-A (hdac1-a) from Xenopus laevis (African clawed frog).